We begin with the raw amino-acid sequence, 172 residues long: RNA pyrophosphohydrolase (172 aa).

Residues 8-153 form the Nudix hydrolase domain; it reads QHRPNVGVVL…KRGVYEAVVA (146 aa). Positions 43 to 64 match the Nudix box motif; sequence GGVDEGEDLEVAARRELAEETG.

This sequence belongs to the Nudix hydrolase family. RppH subfamily. A divalent metal cation serves as cofactor.

Its function is as follows. Accelerates the degradation of transcripts by removing pyrophosphate from the 5'-end of triphosphorylated RNA, leading to a more labile monophosphorylated state that can stimulate subsequent ribonuclease cleavage. This chain is RNA pyrophosphohydrolase, found in Caulobacter vibrioides (strain ATCC 19089 / CIP 103742 / CB 15) (Caulobacter crescentus).